The following is a 410-amino-acid chain: Probable intron-encoded endonuclease bI1 (410 aa).

Positions 1–131 (MRLLKTHPIL…VLMMAIAFLG (131 aa)) are COB exon 1 encoded. The next 3 membrane-spanning stretches (helical) occupy residues 32–52 (FGSL…FLAM), 75–95 (GWLI…FVYL), and 112–132 (LLWS…FLGF). The interval 132-410 (FNGQKYMCFY…KKNYIVKVIK (279 aa)) is COB intron 1 encoded. Positions 196–286 (PFSGIYMIVN…LETLKPEYNI (91 aa)) constitute a GIY-YIG domain.

To endonucleases of group I introns of fungi and phage. The mature protein may arise from proteolytic cleavage of an in-frame translation of COB exon 1 plus intron 1, containing the bI1 open reading frame.

The protein resides in the mitochondrion. Its subcellular location is the membrane. Functionally, mitochondrial DNA endonuclease involved in intron homing. The protein is Probable intron-encoded endonuclease bI1 (bI1) of Mycosarcoma maydis (Corn smut fungus).